The chain runs to 392 residues: Probable protein phosphatase 2C 29 (392 aa).

The PPM-type phosphatase domain occupies Asp-44–Leu-353. 4 residues coordinate Mn(2+): Asp-75, Gly-76, Asp-285, and Asp-344. The interval Ala-360 to Arg-392 is disordered.

It belongs to the PP2C family. Mg(2+) is required as a cofactor. The cofactor is Mn(2+).

The enzyme catalyses O-phospho-L-seryl-[protein] + H2O = L-seryl-[protein] + phosphate. The catalysed reaction is O-phospho-L-threonyl-[protein] + H2O = L-threonyl-[protein] + phosphate. The protein is Probable protein phosphatase 2C 29 of Oryza sativa subsp. japonica (Rice).